A 674-amino-acid chain; its full sequence is Tripartite terminase subunit 3 (674 aa).

A Walker A motif motif is present at residues 212–219 (VPRRHGKT). Positions 305 to 310 (LLLVDE) match the Walker B motif motif. Catalysis depends on glutamate 310, which acts as the For ATPase activity. Residues aspartate 463, glutamate 534, and aspartate 651 each act as for nuclease activity in the active site.

Belongs to the herpesviridae TRM3 protein family. As to quaternary structure, interacts with the terminase subunits TRM1 and TRM2. Interacts with portal protein.

The protein resides in the host nucleus. In terms of biological role, component of the molecular motor that translocates viral genomic DNA in empty capsid during DNA packaging. Forms a tripartite terminase complex together with TRM1 and TRM2 in the host cytoplasm. Once the complex reaches the host nucleus, it interacts with the capsid portal vertex. This portal forms a ring in which genomic DNA is translocated into the capsid. TRM3 carries an RNase H-like nuclease activity that plays an important role for the cleavage of concatemeric viral DNA into unit length genomes. The polypeptide is Tripartite terminase subunit 3 (Homo sapiens (Human)).